The following is a 189-amino-acid chain: dCTP deaminase (189 aa).

DCTP-binding positions include 112–117 (KSTYAR), 136–138 (TLE), Q157, Y171, and Q181. E138 functions as the Proton donor/acceptor in the catalytic mechanism.

This sequence belongs to the dCTP deaminase family. As to quaternary structure, homotrimer.

It catalyses the reaction dCTP + H2O + H(+) = dUTP + NH4(+). It participates in pyrimidine metabolism; dUMP biosynthesis; dUMP from dCTP (dUTP route): step 1/2. In terms of biological role, catalyzes the deamination of dCTP to dUTP. The chain is dCTP deaminase from Burkholderia mallei (strain NCTC 10247).